The chain runs to 207 residues: Succinyl-CoA:3-ketoacid coenzyme A transferase subunit B (207 aa).

The active site involves E43.

This sequence belongs to the 3-oxoacid CoA-transferase subunit B family. As to quaternary structure, heterodimer of a subunit A and a subunit B.

It carries out the reaction a 3-oxo acid + succinyl-CoA = a 3-oxoacyl-CoA + succinate. The chain is Succinyl-CoA:3-ketoacid coenzyme A transferase subunit B (scoB) from Helicobacter pylori (strain ATCC 700392 / 26695) (Campylobacter pylori).